A 67-amino-acid chain; its full sequence is Alpha-toxin Cn12 (67 aa).

Positions 1–66 (RDGYPLASNG…WGDSGTGPCR (66 aa)) constitute an LCN-type CS-alpha/beta domain. Intrachain disulfides connect cysteine 11/cysteine 65, cysteine 15/cysteine 40, cysteine 25/cysteine 45, and cysteine 29/cysteine 47.

In terms of tissue distribution, expressed by the venom gland.

The protein resides in the secreted. Alpha toxins bind voltage-independently at site-3 of sodium channels (Nav) and inhibit the inactivation of the activated channels, thereby blocking neuronal transmission. This toxin binds, in vitro, to sodium channels and inhibits the inactivation of the activated channels. Seems not toxic to mice, crickets and sweet-water shrimps. The sequence is that of Alpha-toxin Cn12 from Centruroides noxius (Mexican scorpion).